A 216-amino-acid polypeptide reads, in one-letter code: ATP-dependent Clp protease proteolytic subunit (216 aa).

Residue Ser-109 is the Nucleophile of the active site. His-134 is a catalytic residue.

It belongs to the peptidase S14 family. In terms of assembly, fourteen ClpP subunits assemble into 2 heptameric rings which stack back to back to give a disk-like structure with a central cavity, resembling the structure of eukaryotic proteasomes.

It localises to the cytoplasm. The enzyme catalyses Hydrolysis of proteins to small peptides in the presence of ATP and magnesium. alpha-casein is the usual test substrate. In the absence of ATP, only oligopeptides shorter than five residues are hydrolyzed (such as succinyl-Leu-Tyr-|-NHMec, and Leu-Tyr-Leu-|-Tyr-Trp, in which cleavage of the -Tyr-|-Leu- and -Tyr-|-Trp bonds also occurs).. Cleaves peptides in various proteins in a process that requires ATP hydrolysis. Has a chymotrypsin-like activity. Plays a major role in the degradation of misfolded proteins. The protein is ATP-dependent Clp protease proteolytic subunit of Rhodospirillum rubrum (strain ATCC 11170 / ATH 1.1.1 / DSM 467 / LMG 4362 / NCIMB 8255 / S1).